We begin with the raw amino-acid sequence, 99 residues long: Nucleoid-associated protein UPA3_0088 (99 aa).

Belongs to the YbaB/EbfC family. In terms of assembly, homodimer.

The protein resides in the cytoplasm. Its subcellular location is the nucleoid. Its function is as follows. Binds to DNA and alters its conformation. May be involved in regulation of gene expression, nucleoid organization and DNA protection. The polypeptide is Nucleoid-associated protein UPA3_0088 (Ureaplasma parvum serovar 3 (strain ATCC 27815 / 27 / NCTC 11736)).